Consider the following 452-residue polypeptide: 3-phosphoshikimate 1-carboxyvinyltransferase (452 aa).

Positions 1-23 are disordered; sequence MLNGSASKPATARKSAGLTGSVR. 3-phosphoshikimate is bound by residues K28, S29, and R33. Residue K28 participates in phosphoenolpyruvate binding. Residues G100 and R128 each contribute to the phosphoenolpyruvate site. S173, Q175, D326, and K353 together coordinate 3-phosphoshikimate. Residue Q175 participates in phosphoenolpyruvate binding. D326 acts as the Proton acceptor in catalysis. Phosphoenolpyruvate is bound by residues R357 and R405.

This sequence belongs to the EPSP synthase family. Monomer.

It localises to the cytoplasm. The enzyme catalyses 3-phosphoshikimate + phosphoenolpyruvate = 5-O-(1-carboxyvinyl)-3-phosphoshikimate + phosphate. It participates in metabolic intermediate biosynthesis; chorismate biosynthesis; chorismate from D-erythrose 4-phosphate and phosphoenolpyruvate: step 6/7. In terms of biological role, catalyzes the transfer of the enolpyruvyl moiety of phosphoenolpyruvate (PEP) to the 5-hydroxyl of shikimate-3-phosphate (S3P) to produce enolpyruvyl shikimate-3-phosphate and inorganic phosphate. This chain is 3-phosphoshikimate 1-carboxyvinyltransferase, found in Rhizobium johnstonii (strain DSM 114642 / LMG 32736 / 3841) (Rhizobium leguminosarum bv. viciae).